The following is a 1000-amino-acid chain: Integrin alpha-PS5 (1000 aa).

FG-GAP repeat units lie at residues 15-74 (KHLK…GSCS), 75-137 (HYVL…DTPP), 145-198 (SLIP…AAQG), 199-261 (SYAV…GEIV), 262-323 (RKLH…FKFE), 324-379 (KKII…GLRD), and 386-448 (DAPS…SESR). N58 carries an N-linked (GlcNAc...) asparagine glycan. Residue N231 is glycosylated (N-linked (GlcNAc...) asparagine). N-linked (GlcNAc...) asparagine glycosylation is found at N516, N592, N622, N732, N771, N829, N842, N853, and N922. The chain crosses the membrane as a helical span at residues 930-950 (IWYIILSLIAGHLLLGAMTYI). The Cytoplasmic segment spans residues 951–1000 (LYKLRFFKRGKKEELKRLLEEHRSETKEPATDCEGNQEEINVEMHSDLEN). Positions 971-980 (EHRSETKEPA) are enriched in basic and acidic residues. Residues 971-1000 (EHRSETKEPATDCEGNQEEINVEMHSDLEN) are disordered.

Belongs to the integrin alpha chain family. As to quaternary structure, heterodimer of an alpha and a beta subunit. Alpha-PS5 associates with beta-PS. Expressed in all follicle cells overlying the oocyte during mid-oogenesis, the strongest expression is observed in the cells covering the anterior end of the oocyte and in the cells forming the dorsal appendages. After completion of oocyte enlargement, expression in main body follicle cells is down-regulated but persists strongly in the dorsal appendage forming cells. Expressed in lamellocytes.

It is found in the membrane. In terms of biological role, possible role in cell-cell interactions. Minor involvement in the establishment of the oocyte anterior-posterior length. The chain is Integrin alpha-PS5 from Drosophila melanogaster (Fruit fly).